A 326-amino-acid chain; its full sequence is 4-hydroxythreonine-4-phosphate dehydrogenase (326 aa).

Substrate is bound by residues histidine 132 and threonine 133. The a divalent metal cation site is built by histidine 162, histidine 207, and histidine 262. Residues lysine 270, asparagine 279, and arginine 288 each coordinate substrate.

This sequence belongs to the PdxA family. Homodimer. It depends on Zn(2+) as a cofactor. Mg(2+) serves as cofactor. Requires Co(2+) as cofactor.

Its subcellular location is the cytoplasm. It carries out the reaction 4-(phosphooxy)-L-threonine + NAD(+) = 3-amino-2-oxopropyl phosphate + CO2 + NADH. It functions in the pathway cofactor biosynthesis; pyridoxine 5'-phosphate biosynthesis; pyridoxine 5'-phosphate from D-erythrose 4-phosphate: step 4/5. Its function is as follows. Catalyzes the NAD(P)-dependent oxidation of 4-(phosphooxy)-L-threonine (HTP) into 2-amino-3-oxo-4-(phosphooxy)butyric acid which spontaneously decarboxylates to form 3-amino-2-oxopropyl phosphate (AHAP). The protein is 4-hydroxythreonine-4-phosphate dehydrogenase of Ruegeria sp. (strain TM1040) (Silicibacter sp.).